The sequence spans 41 residues: Large ribosomal subunit protein bL36 (41 aa).

The protein belongs to the bacterial ribosomal protein bL36 family.

The protein is Large ribosomal subunit protein bL36 of Methylocella silvestris (strain DSM 15510 / CIP 108128 / LMG 27833 / NCIMB 13906 / BL2).